Reading from the N-terminus, the 190-residue chain is Elongation factor P-like protein (190 aa).

This sequence belongs to the elongation factor P family.

The sequence is that of Elongation factor P-like protein from Photorhabdus laumondii subsp. laumondii (strain DSM 15139 / CIP 105565 / TT01) (Photorhabdus luminescens subsp. laumondii).